We begin with the raw amino-acid sequence, 681 residues long: MIDRYKHQQLRIGSVSPQQISAWANKILPNGEIVGEVTKPYTFHYKTNKPEKDGLFCERIFGPIKSGICACGNYRVIGNEKEDPKFCEQCGVEFVDSRIRRYQMGYIKLACPVTHVWYLKRLPSYIASLLDKPLKELEGLVYCDFSFARPIAKKPTFLRLRGSFESEIQSRKYSIPLFFTTQDFDTFRNREISTGAGAIKEQLADPDLRIITDHSLVEWKELGEEGSADGNEWEDRKIGRRKDFLVRRMELAKHFIRTNVEPERMVLCLLPVLPPELRPIIQIDGGKPMSSDINELYRRVIYRNNTLTDPLTTSRSTPGESVMCQEKLVQEAVDTLLDNGIRGQPMRDGHNKVYKSFSDVIEGKEGRFRETLLGKRVDYSGRSVIVVGPSLSLHRCGLPREIAIELFQTFVIRGLIRQHVASNIGIAKSKIREKEPIVWEILQEVMQGHPVLLNRAPTLHRLGIQAFQPILVEGRAICLHPLVRKGFNADFDGDQMAVHVPLSLEAQAEARLLMFSHMNLLSPAIGDPISVPTQDMLIGLYILTIGNRRGICSNRYNPCNRRNYQNETVDYNKYTKEKEPYFCSSYDALGAYRQKRINLDSPLWLRWRLDQRVIASREVPIEVQYESLGTYHEIYGHYLIVRSVKKEILCIYIRTTVGHISFYREIEEAIQGFCRAYLYDT.

The Zn(2+) site is built by cysteine 69, cysteine 71, cysteine 87, and cysteine 90. Positions 490, 492, and 494 each coordinate Mg(2+).

The protein belongs to the RNA polymerase beta' chain family. RpoC1 subfamily. In plastids the minimal PEP RNA polymerase catalytic core is composed of four subunits: alpha, beta, beta', and beta''. When a (nuclear-encoded) sigma factor is associated with the core the holoenzyme is formed, which can initiate transcription. Mg(2+) is required as a cofactor. Zn(2+) serves as cofactor.

The protein localises to the plastid. It localises to the chloroplast. The enzyme catalyses RNA(n) + a ribonucleoside 5'-triphosphate = RNA(n+1) + diphosphate. DNA-dependent RNA polymerase catalyzes the transcription of DNA into RNA using the four ribonucleoside triphosphates as substrates. The chain is DNA-directed RNA polymerase subunit beta' from Liriodendron tulipifera (Tuliptree).